We begin with the raw amino-acid sequence, 527 residues long: MNQSAEAPSSENVATRQIRIFDTTLRDGEQSPGASMNLAEKLEVASALVDLGVDIIEAGFPIASPGDFESVRQIATTIRGATICGLARCAEKDIDRAWEALKTAPQARIHVFLATSAIHREFKLRMTPDEIVERAVAGVRRAASHCDDVEFSPEDACRTEHDFLCRVVEAAIDAGATTINVPDTVGYTTPGEIYDRFKMLRDRVPNMDKAVLSTHCHDDLGMAVANSLAAVDAGAGQIECTINGIGERAGNAALEELVMAMKTRQDFYHCQTNINSKRLVPVSRLVSKTTGINVQRNKAIVGRNAFAHESGIHQDGMLKERTTYEIMSPEEVGFTKTDLVLGKHSGRAALADRAKQLGMTLTGEQLQEVFEAFKELADKKKEIYDGDIVALVQQKISETVAPEWTLVDYEVTSGKNQTPNVRVTLRRDEQDITEQVAQGDGPIDAAFWAVEKITGIQVVCKDFRVRSATLGRDAIGEVNLEVEHEGKTYRGTGVSTDSVESTILAMLNAINRIVAGIASDPGELPQP.

Residues 18-280 (IRIFDTTLRD…QTNINSKRLV (263 aa)) enclose the Pyruvate carboxyltransferase domain. 4 residues coordinate Mn(2+): D27, H215, H217, and N251. Positions 405–527 (TLVDYEVTSG…ASDPGELPQP (123 aa)) are regulatory domain.

It belongs to the alpha-IPM synthase/homocitrate synthase family. LeuA type 1 subfamily. In terms of assembly, homodimer. Mn(2+) serves as cofactor.

The protein resides in the cytoplasm. It catalyses the reaction 3-methyl-2-oxobutanoate + acetyl-CoA + H2O = (2S)-2-isopropylmalate + CoA + H(+). Its pathway is amino-acid biosynthesis; L-leucine biosynthesis; L-leucine from 3-methyl-2-oxobutanoate: step 1/4. In terms of biological role, catalyzes the condensation of the acetyl group of acetyl-CoA with 3-methyl-2-oxobutanoate (2-ketoisovalerate) to form 3-carboxy-3-hydroxy-4-methylpentanoate (2-isopropylmalate). The polypeptide is 2-isopropylmalate synthase (Rhodopirellula baltica (strain DSM 10527 / NCIMB 13988 / SH1)).